Reading from the N-terminus, the 223-residue chain is Receptor-transporting protein 2 (223 aa).

Residues 1–193 (MSTSLTTCEW…KKGQAGFISS (193 aa)) lie on the Cytoplasmic side of the membrane. The segment at 52–161 (ASGRFHCSWC…SEFCEACQEG (110 aa)) adopts a 3CxxC-type zinc-finger fold. Residues 194-216 (FFSFRWCLFWGTLCLVIVYLQFF) traverse the membrane as a helical segment. At 217–223 (RGRSGFL) the chain is on the extracellular side.

The protein belongs to the TMEM7 family. Interacts with olfactory receptors. As to expression, predominantly expressed in olfactory and vomeronasal organs, in mature olfactory sensory neurons.

It is found in the cell membrane. Functionally, specifically promotes functional cell surface expression of olfactory receptors, but not of other GPCRs. In Mus musculus (Mouse), this protein is Receptor-transporting protein 2 (Rtp2).